A 439-amino-acid chain; its full sequence is Damage-control phosphatase ARMT1 (439 aa).

Alanine 2 is subject to N-acetylalanine. Phosphoserine is present on serine 4. An N6-acetyllysine modification is found at lysine 40. Residues aspartate 251 and asparagine 252 each coordinate Mn(2+). 251-252 serves as a coordination point for substrate; it reads DN. S-adenosyl-L-methionine is bound by residues glutamate 256 and aspartate 289. Position 289 (aspartate 289) interacts with Mn(2+). Substrate contacts are provided by residues 365–369 and lysine 402; that span reads DLNYR. The Subfamily III RTxK motif motif lies at 399–402; sequence RTLK.

The protein belongs to the damage-control phosphatase family. Sugar phosphate phosphatase III subfamily. Requires Mn(2+) as cofactor. The cofactor is Ni(2+). Automethylated.

The catalysed reaction is beta-D-fructose 1-phosphate + H2O = D-fructose + phosphate. It catalyses the reaction beta-D-fructose 6-phosphate = dihydroxyacetone + D-glyceraldehyde 3-phosphate. It carries out the reaction L-glutamyl-[protein] + S-adenosyl-L-methionine = [protein]-L-glutamate 5-O-methyl ester + S-adenosyl-L-homocysteine. Functionally, metal-dependent phosphatase that shows phosphatase activity against several substrates, including fructose-1-phosphate and fructose-6-phosphate. Its preference for fructose-1-phosphate, a strong glycating agent that causes DNA damage rather than a canonical yeast metabolite, suggests a damage-control function in hexose phosphate metabolism. Has also been shown to have O-methyltransferase activity that methylates glutamate residues of target proteins to form gamma-glutamyl methyl ester residues. Possibly methylates PCNA, suggesting it is involved in the DNA damage response. The sequence is that of Damage-control phosphatase ARMT1 from Rattus norvegicus (Rat).